Reading from the N-terminus, the 127-residue chain is uncharacterized protein (127 aa).

The segment at 1 to 34 (MKNPESSGVSSSPQIQRVSPSSSSTSPSPPSIGT) is disordered. A compositionally biased stretch (low complexity) spans 9–34 (VSSSPQIQRVSPSSSSTSPSPPSIGT). 2 helical membrane passes run 47–67 (IAAV…PLAM) and 84–104 (TIAV…YLLV).

It localises to the membrane. This is an uncharacterized protein from Saccharomyces cerevisiae (strain ATCC 204508 / S288c) (Baker's yeast).